Here is a 74-residue protein sequence, read N- to C-terminus: Protein krueppel (74 aa).

4 consecutive C2H2-type zinc fingers follow at residues 1 to 4, 10 to 32, 38 to 60, and 66 to 74; these read ERTH, FKCP…MRLH, YHCS…LRVH, and YTCEICKAK.

It belongs to the krueppel C2H2-type zinc-finger protein family.

The protein localises to the nucleus. Functionally, krueppel is a gap class segmentation protein. This Bradysia coprophila (Dark-winged fungus gnat) protein is Protein krueppel (Kr).